The following is a 103-amino-acid chain: Large ribosomal subunit protein bL21 (103 aa).

Belongs to the bacterial ribosomal protein bL21 family. Part of the 50S ribosomal subunit. Contacts protein L20.

Functionally, this protein binds to 23S rRNA in the presence of protein L20. This is Large ribosomal subunit protein bL21 from Burkholderia ambifaria (strain MC40-6).